The following is a 426-amino-acid chain: Serine--tRNA ligase (426 aa).

233-235 contributes to the L-serine binding site; that stretch reads TAE. ATP is bound at residue 264–266; that stretch reads RAE. L-serine is bound at residue glutamate 287. 351-354 provides a ligand contact to ATP; it reads EISS. L-serine is bound at residue serine 387.

This sequence belongs to the class-II aminoacyl-tRNA synthetase family. Type-1 seryl-tRNA synthetase subfamily. As to quaternary structure, homodimer. The tRNA molecule binds across the dimer.

The protein resides in the cytoplasm. It catalyses the reaction tRNA(Ser) + L-serine + ATP = L-seryl-tRNA(Ser) + AMP + diphosphate + H(+). The catalysed reaction is tRNA(Sec) + L-serine + ATP = L-seryl-tRNA(Sec) + AMP + diphosphate + H(+). Its pathway is aminoacyl-tRNA biosynthesis; selenocysteinyl-tRNA(Sec) biosynthesis; L-seryl-tRNA(Sec) from L-serine and tRNA(Sec): step 1/1. Functionally, catalyzes the attachment of serine to tRNA(Ser). Is also able to aminoacylate tRNA(Sec) with serine, to form the misacylated tRNA L-seryl-tRNA(Sec), which will be further converted into selenocysteinyl-tRNA(Sec). In Clostridium kluyveri (strain NBRC 12016), this protein is Serine--tRNA ligase.